A 252-amino-acid polypeptide reads, in one-letter code: Imidazole glycerol phosphate synthase subunit HisF (252 aa).

Catalysis depends on residues Asp11 and Asp130.

The protein belongs to the HisA/HisF family. As to quaternary structure, heterodimer of HisH and HisF.

It localises to the cytoplasm. It catalyses the reaction 5-[(5-phospho-1-deoxy-D-ribulos-1-ylimino)methylamino]-1-(5-phospho-beta-D-ribosyl)imidazole-4-carboxamide + L-glutamine = D-erythro-1-(imidazol-4-yl)glycerol 3-phosphate + 5-amino-1-(5-phospho-beta-D-ribosyl)imidazole-4-carboxamide + L-glutamate + H(+). Its pathway is amino-acid biosynthesis; L-histidine biosynthesis; L-histidine from 5-phospho-alpha-D-ribose 1-diphosphate: step 5/9. Its function is as follows. IGPS catalyzes the conversion of PRFAR and glutamine to IGP, AICAR and glutamate. The HisF subunit catalyzes the cyclization activity that produces IGP and AICAR from PRFAR using the ammonia provided by the HisH subunit. The protein is Imidazole glycerol phosphate synthase subunit HisF of Bacillus cereus (strain AH820).